Here is a 132-residue protein sequence, read N- to C-terminus: UPF0102 protein LI0223 (132 aa).

This sequence belongs to the UPF0102 family.

The sequence is that of UPF0102 protein LI0223 from Lawsonia intracellularis (strain PHE/MN1-00).